We begin with the raw amino-acid sequence, 360 residues long: D-alanine--D-alanine ligase (360 aa).

The ATP-grasp domain maps to 146 to 352 (KLCAVQAGIH…FTELIDRLVR (207 aa)). 179 to 234 (KKRFAPPFFVKPANLGSSVGIAKIHSFDELENALDEACRLDVKILVEKAIEGREVE) provides a ligand contact to ATP. Positions 305, 319, and 321 each coordinate Mg(2+).

This sequence belongs to the D-alanine--D-alanine ligase family. Requires Mg(2+) as cofactor. The cofactor is Mn(2+).

It localises to the cytoplasm. The catalysed reaction is 2 D-alanine + ATP = D-alanyl-D-alanine + ADP + phosphate + H(+). Its pathway is cell wall biogenesis; peptidoglycan biosynthesis. In terms of biological role, cell wall formation. The sequence is that of D-alanine--D-alanine ligase from Chlorobium phaeobacteroides (strain BS1).